A 344-amino-acid polypeptide reads, in one-letter code: tRNA N6-adenosine threonylcarbamoyltransferase (344 aa).

His111 and His115 together coordinate Fe cation. Substrate contacts are provided by residues 136–140 (LVSGG), Asp169, Gly182, and Asn279. Asp307 provides a ligand contact to Fe cation.

It belongs to the KAE1 / TsaD family. The cofactor is Fe(2+).

The protein resides in the cytoplasm. It carries out the reaction L-threonylcarbamoyladenylate + adenosine(37) in tRNA = N(6)-L-threonylcarbamoyladenosine(37) in tRNA + AMP + H(+). Functionally, required for the formation of a threonylcarbamoyl group on adenosine at position 37 (t(6)A37) in tRNAs that read codons beginning with adenine. Is involved in the transfer of the threonylcarbamoyl moiety of threonylcarbamoyl-AMP (TC-AMP) to the N6 group of A37, together with TsaE and TsaB. TsaD likely plays a direct catalytic role in this reaction. The protein is tRNA N6-adenosine threonylcarbamoyltransferase of Mannheimia succiniciproducens (strain KCTC 0769BP / MBEL55E).